The primary structure comprises 362 residues: Phenylalanine--tRNA ligase alpha subunit (362 aa).

Glu-263 lines the Mg(2+) pocket.

The protein belongs to the class-II aminoacyl-tRNA synthetase family. Phe-tRNA synthetase alpha subunit type 1 subfamily. In terms of assembly, tetramer of two alpha and two beta subunits. Requires Mg(2+) as cofactor.

Its subcellular location is the cytoplasm. It carries out the reaction tRNA(Phe) + L-phenylalanine + ATP = L-phenylalanyl-tRNA(Phe) + AMP + diphosphate + H(+). This is Phenylalanine--tRNA ligase alpha subunit from Caulobacter sp. (strain K31).